The primary structure comprises 227 residues: uncharacterized protein (227 aa).

The N-terminal stretch at 1–25 (MLIMKKLLLIAATSATMLSSSVSFA) is a signal peptide.

This sequence to R.conorii RC1281.

This is an uncharacterized protein from Rickettsia conorii (strain ATCC VR-613 / Malish 7).